The following is a 284-amino-acid chain: GPN-loop GTPase 3 (284 aa).

Residue 13 to 18 coordinates GTP; sequence GSGKST. Positions 72–74 match the Gly-Pro-Asn (GPN)-loop; involved in dimer interface motif; it reads GPN. 174-177 lines the GTP pocket; the sequence is TKMD.

Belongs to the GPN-loop GTPase family. In terms of assembly, heterodimer with GPN1. Binds to RNA polymerase II (RNAPII). Interacts directly with subunits RPB4 and RPB7 and the CTD of RPB1.

Small GTPase required for proper localization of RNA polymerase II (RNAPII). May act at an RNAP assembly step prior to nuclear import. The protein is GPN-loop GTPase 3 of Homo sapiens (Human).